We begin with the raw amino-acid sequence, 311 residues long: 2-dehydro-3-deoxygluconokinase (311 aa).

Substrate is bound by residues 34 to 35 (GS), 106 to 108 (YYR), and R166. ATP contacts are provided by residues 164-166 (NIR), 224-229 (KLGPKG), 253-256 (GAGD), and S283. 2 residues coordinate substrate: G253 and D256. The active-site Proton acceptor is the D256. D292 contacts substrate.

This sequence belongs to the carbohydrate kinase PfkB family. As to quaternary structure, homotetramer. Requires a divalent metal cation as cofactor.

It carries out the reaction 2-dehydro-3-deoxy-D-gluconate + ATP = 2-dehydro-3-deoxy-6-phospho-D-gluconate + ADP + H(+). Its pathway is carbohydrate acid metabolism; 2-dehydro-3-deoxy-D-gluconate degradation; D-glyceraldehyde 3-phosphate and pyruvate from 2-dehydro-3-deoxy-D-gluconate: step 1/2. Involved in the degradation of glucose via the semi-phosphorylative Entner-Doudoroff pathway. Catalyzes the phosphorylation of 2-keto-3-deoxygluconate (KDG) to produce 2-keto-3-deoxy-6-phosphogluconate (KDPG). Can also use GTP, but not ADP or AMP, as a phosphoryl donor and 2-keto-D-gluconate (KG) as a phosphoryl acceptor. This chain is 2-dehydro-3-deoxygluconokinase, found in Sulfurisphaera tokodaii (strain DSM 16993 / JCM 10545 / NBRC 100140 / 7) (Sulfolobus tokodaii).